The sequence spans 25 residues: Omega-conotoxin MVIIB (25 aa).

3 disulfide bridges follow: Cys-1–Cys-16, Cys-8–Cys-20, and Cys-15–Cys-25. A Cysteine amide modification is found at Cys-25.

This sequence belongs to the conotoxin O1 superfamily. Expressed by the venom duct.

It is found in the secreted. In terms of biological role, omega-conotoxins act at presynaptic membranes, they bind and block voltage-gated calcium channels (Cav). The chain is Omega-conotoxin MVIIB from Conus magus (Magical cone).